The primary structure comprises 288 residues: Bifunctional protein FolD (288 aa).

166 to 168 (GRS) serves as a coordination point for NADP(+).

This sequence belongs to the tetrahydrofolate dehydrogenase/cyclohydrolase family. Homodimer.

The catalysed reaction is (6R)-5,10-methylene-5,6,7,8-tetrahydrofolate + NADP(+) = (6R)-5,10-methenyltetrahydrofolate + NADPH. It carries out the reaction (6R)-5,10-methenyltetrahydrofolate + H2O = (6R)-10-formyltetrahydrofolate + H(+). It participates in one-carbon metabolism; tetrahydrofolate interconversion. In terms of biological role, catalyzes the oxidation of 5,10-methylenetetrahydrofolate to 5,10-methenyltetrahydrofolate and then the hydrolysis of 5,10-methenyltetrahydrofolate to 10-formyltetrahydrofolate. This chain is Bifunctional protein FolD, found in Levilactobacillus brevis (strain ATCC 367 / BCRC 12310 / CIP 105137 / JCM 1170 / LMG 11437 / NCIMB 947 / NCTC 947) (Lactobacillus brevis).